A 1149-amino-acid polypeptide reads, in one-letter code: cGMP-specific 3',5'-cyclic phosphodiesterase (1149 aa).

Low complexity-rich tracts occupy residues 1–19 (MHGT…DVSS) and 31–47 (ATSS…ASSS). The segment at 1-175 (MHGTVSRSSS…STTASQQDVD (175 aa)) is disordered. Over residues 48 to 59 (KPLTNGANKTAI) the composition is skewed to polar residues. Low complexity predominate over residues 60-85 (STAAGVTPGAAPGPGCAAIPASGSSG). The segment covering 96–108 (QSNNNRPAGSNRS) has biased composition (polar residues). Positions 132–158 (SSSSPSQSPSQSQSQSQASIQTQTSQQ) are enriched in low complexity. 2 GAF domains span residues 278–430 (DIDV…GIGI) and 462–643 (NLEC…GLGI). The PDEase domain occupies 673–996 (SQDQTEKLTQ…RNWQDLAEKV (324 aa)). The Proton donor role is filled by His749. His753, His789, Asp790, and Asp900 together coordinate a divalent metal cation. 2 disordered regions span residues 1037-1066 (QQSQ…TGAL) and 1096-1149 (SHVS…CALL). Composition is skewed to basic and acidic residues over residues 1042-1053 (GSEDSHTPEHQR) and 1096-1106 (SHVSEDMDDKS). The segment covering 1115 to 1135 (ASGSMGRMSASSSTSSAGGQM) has biased composition (low complexity). Basic residues predominate over residues 1139-1149 (SKKRSKLCALL). Cys1146 carries the cysteine methyl ester modification. Residue Cys1146 is the site of S-farnesyl cysteine attachment. The propeptide at 1147-1149 (ALL) is removed in mature form.

Belongs to the cyclic nucleotide phosphodiesterase family. Interacts with PrBP. It depends on a divalent metal cation as a cofactor.

The protein resides in the cell membrane. It catalyses the reaction 3',5'-cyclic GMP + H2O = GMP + H(+). Has a role regulating cGMP transport in Malpighian tubule principal cells. This Drosophila yakuba (Fruit fly) protein is cGMP-specific 3',5'-cyclic phosphodiesterase.